Consider the following 232-residue polypeptide: Dehydrin DHN2 (232 aa).

Residues methionine 1–threonine 12 are compositionally biased toward polar residues. Disordered stretches follow at residues methionine 1–threonine 92, proline 131–glycine 156, and proline 173–histidine 232. The span at threonine 73 to glycine 82 shows a compositional bias: gly residues. Residues proline 131–threonine 140 show a composition bias toward basic and acidic residues. Gly residues predominate over residues threonine 143–glycine 156. Residues tyrosine 200–leucine 223 show a composition bias toward basic and acidic residues.

The protein belongs to the plant dehydrin family.

This chain is Dehydrin DHN2 (DHN2), found in Pisum sativum (Garden pea).